The chain runs to 346 residues: Serpentine receptor class beta-11 (346 aa).

The next 7 membrane-spanning stretches (helical) occupy residues 26–46, 57–77, 102–122, 139–159, 186–206, 239–259, and 278–298; these read YQMI…LFKL, TIFI…LTTS, IWNF…CSVT, SVVM…CIIF, FTFF…DLIL, VFLI…VVFF, and TFST…SSFF.

This sequence belongs to the nematode receptor-like protein srb family.

The protein resides in the membrane. The protein is Serpentine receptor class beta-11 (srb-11) of Caenorhabditis elegans.